The sequence spans 180 residues: Endogenous alpha-amylase/subtilisin inhibitor (180 aa).

2 disulfide bridges follow: Cys42–Cys89 and Cys143–Cys147.

Belongs to the protease inhibitor I3 (leguminous Kunitz-type inhibitor) family.

Inhibitor of endogenous alpha-amylase (wheat also produces an exogenous inhibitor which inactivates alpha-amylase from animal and insect origin). This inhibitor can also inhibit subtilisin. The protein is Endogenous alpha-amylase/subtilisin inhibitor of Triticum aestivum (Wheat).